The primary structure comprises 75 residues: Metallothionein-like protein 1B (75 aa).

This sequence belongs to the metallothionein superfamily. Type 15 family.

Metallothioneins have a high content of cysteine residues that bind various heavy metals. This is Metallothionein-like protein 1B (MT1B) from Vicia faba (Broad bean).